Here is a 708-residue protein sequence, read N- to C-terminus: Solute carrier family 15 member 1 (708 aa).

Residues 1–21 (MGMSKSYGCFGYPLSIFFIVV) traverse the membrane as a helical segment. Residues 22–53 (NEFCERFSYYGMRALLILYFRRFIGWDDNLST) lie on the Extracellular side of the membrane. N-linked (GlcNAc...) asparagine glycosylation occurs at asparagine 50. The helical transmembrane segment at 54-74 (AIYHTFVALCYLTPILGALIA) threads the bilayer. The Cytoplasmic segment spans residues 75 to 82 (DSWLGKFK). The helical transmembrane segment at 83–103 (TIVSLSIVYTIGQAVTAVSSI) threads the bilayer. The Extracellular portion of the chain corresponds to 104–118 (NDLTDYNKDGTPDNL). Residue asparagine 117 is glycosylated (N-linked (GlcNAc...) asparagine). The helical transmembrane segment at 119 to 139 (SVHVALSMIGLALIALGTGGI) threads the bilayer. Topologically, residues 140 to 161 (KPCVSAFGGDQFEEGQEKQRNR) are cytoplasmic. A helical membrane pass occupies residues 162-182 (FFSIFYLAINAGSLISTIVTP). The Extracellular portion of the chain corresponds to 183–198 (MLRVHECGIYSQKACY). The helical transmembrane segment at 199-219 (PLAFGVPAALMAVSLIVFVIG) threads the bilayer. At 220–276 (SGMYKKFQPQGNVMGKVVKCIGFALKNRFRHRSKQFPKREHWLDWAKEKYDERLISQ) the chain is on the cytoplasmic side. A helical membrane pass occupies residues 277–297 (IKMVTKVMFLYIPLPMFWALF). Residues 298–327 (DQQGSRWTLQATAMSGKIGLLEVQPDQMQT) are Extracellular-facing. A helical membrane pass occupies residues 328-348 (VNAILIVVMVPIMDAVVYPLI). The Cytoplasmic segment spans residues 349–361 (AKCGFNFTSLKRM). A helical membrane pass occupies residues 362–382 (TVGMFLASMAFVMAAIVQLEI). The Extracellular portion of the chain corresponds to 383–584 (DKTLPVFPKQ…ISPNTVNMAL (202 aa)). Residues 383–585 (DKTLPVFPKQ…SPNTVNMALQ (203 aa)) are extracellular domain (ECD). N-linked (GlcNAc...) asparagine glycosylation is found at asparagine 408, asparagine 439, asparagine 495, asparagine 499, asparagine 509, asparagine 514, asparagine 527, and asparagine 539. The helical transmembrane segment at 585 to 605 (QIPQYFLITCGEVVFSVTGLE) threads the bilayer. The Cytoplasmic portion of the chain corresponds to 606 to 619 (FSYSQAPSNMKSVL). Residues 620–640 (QAGWLLTVAVGNIIVLIVAGA) traverse the membrane as a helical segment. Residues 641 to 645 (GQFSE) lie on the Extracellular side of the membrane. A helical membrane pass occupies residues 646-666 (QWAEYILFAALLLVVCVIFAI). The Cytoplasmic portion of the chain corresponds to 667 to 708 (MARFYTYVNPAEIEAQFDDDEKKNLEKMNVYSTVTPVSQTQM).

Belongs to the major facilitator superfamily. Proton-dependent oligopeptide transporter (POT/PTR) (TC 2.A.17) family. Interacts (via extracellular domain region) with trypsin.

The protein localises to the apical cell membrane. The enzyme catalyses a dipeptide(out) + H(+)(out) = a dipeptide(in) + H(+)(in). It catalyses the reaction an L-amino acid tripeptide(out) + H(+)(out) = an L-amino acid tripeptide(in) + H(+)(in). It carries out the reaction L-alanyl-L-lysine(out) + H(+)(out) = L-alanyl-L-lysine(in) + H(+)(in). The catalysed reaction is L-alanyl-L-proline(out) + H(+)(out) = L-alanyl-L-proline(in) + H(+)(in). The enzyme catalyses L-alanyl-L-valine(out) + H(+)(out) = L-alanyl-L-valine(in) + H(+)(in). It catalyses the reaction carnosine(out) + H(+)(out) = carnosine(in) + H(+)(in). It carries out the reaction glycyl-L-glutamine(out) + H(+)(out) = glycyl-L-glutamine(in) + H(+)(in). The catalysed reaction is glycyl-L-leucine(out) + H(+)(out) = glycyl-L-leucine(in) + H(+)(in). The enzyme catalyses glycyl-L-proline(out) + H(+)(out) = glycyl-L-proline(in) + H(+)(in). It catalyses the reaction glycyl-sarcosine(out) + H(+)(out) = glycyl-sarcosine(in) + H(+)(in). It carries out the reaction L-leucyl-L-leucine(out) + H(+)(out) = L-leucyl-L-leucine(in) + H(+)(in). The catalysed reaction is L-leucyl-L-proline(out) + H(+)(out) = L-leucyl-L-proline(in) + H(+)(in). The enzyme catalyses L-phenylalanyl-L-leucine(out) + H(+)(out) = L-phenylalanyl-L-leucine(in) + H(+)(in). It catalyses the reaction L-phenylalanyl-L-phenylalanine(out) + H(+)(out) = L-phenylalanyl-L-phenylalanine(in) + H(+)(in). It carries out the reaction L-lysyl-glycine(out) + H(+)(out) = L-lysyl-glycine(in) + H(+)(in). The catalysed reaction is L-tyrosylglycine(out) + H(+)(out) = L-tyrosylglycine(in) + H(+)(in). The enzyme catalyses L-alanyl-L-aspartate(out) + 2 H(+)(out) = L-alanyl-L-aspartate(in) + 2 H(+)(in). It catalyses the reaction L-aspartyl-glycine(out) + 2 H(+)(out) = L-aspartyl-glycine(in) + 2 H(+)(in). It carries out the reaction glycyl-L-aspartate(out) + 2 H(+)(out) = glycyl-L-aspartate(in) + 2 H(+)(in). The catalysed reaction is glycyl-L-glutamate(out) + 2 H(+)(out) = glycyl-L-glutamate(in) + 2 H(+)(in). The enzyme catalyses L-alanyl-L-leucyl-L-alanine(out) + H(+)(out) = L-alanyl-L-leucyl-L-alanine(in) + H(+)(in). It catalyses the reaction L-alanyl-L-prolylglycine(out) + H(+)(out) = L-alanyl-L-prolylglycine(in) + H(+)(in). It carries out the reaction glycylglycyl-L-isoleucine(out) + H(+)(out) = glycylglycyl-L-isoleucine(in) + H(+)(in). The catalysed reaction is glycylglycyl-L-proline(out) + H(+)(out) = glycylglycyl-L-proline(in) + H(+)(in). The enzyme catalyses L-methionyl-L-phenylalanyl-L-methionine(out) + H(+)(out) = L-methionyl-L-phenylalanyl-L-methionine(in) + H(+)(in). It catalyses the reaction N-acetyl-D-muramoyl-L-alanyl-D-isoglutamine(out) + 2 H(+)(out) = N-acetyl-D-muramoyl-L-alanyl-D-isoglutamine(in) + 2 H(+)(in). It carries out the reaction N(alpha)-formyl-L-methionyl-L-leucyl-L-phenylalanine(out) + 2 H(+)(out) = N(alpha)-formyl-L-methionyl-L-leucyl-L-phenylalanine(in) + 2 H(+)(in). In terms of biological role, electrogenic proton-coupled amino-acid transporter that transports oligopeptides of 2 to 4 amino acids with a preference for dipeptides. Transports neutral and monovalently charged peptides with a proton to peptide stoichiometry of 1:1 or 2:1. Primarily responsible for the absorption of dietary di- and tripeptides from the small intestinal lumen. Mediates transepithelial transport of muramyl and N-formylated bacterial dipeptides contributing to recognition of pathogenic bacteria by the mucosal immune system. The sequence is that of Solute carrier family 15 member 1 (SLC15A1) from Canis lupus familiaris (Dog).